Consider the following 428-residue polypeptide: Homoserine dehydrogenase (428 aa).

The NADPH site is built by Phe-10, Thr-12, Val-13, Arg-44, and Lys-106. An NAD(+)-binding site is contributed by Val-13. NADP(+) contacts are provided by Val-13, Arg-44, and Lys-106. 4 residues coordinate Na(+): Glu-130, Val-133, Gly-135, and Ile-137. Gly-188 and Glu-191 together coordinate NADP(+). Residues Glu-191 and Asp-202 each coordinate L-homoserine. Catalysis depends on Lys-206, which acts as the Proton donor. Gly-303 contributes to the NADPH binding site. Gly-303 provides a ligand contact to NAD(+). Gly-303 provides a ligand contact to NADP(+). The ACT domain maps to 351–425 (YFSVETPDST…DFKLLNYFKV (75 aa)).

It belongs to the homoserine dehydrogenase family. A metal cation serves as cofactor.

The catalysed reaction is L-homoserine + NADP(+) = L-aspartate 4-semialdehyde + NADPH + H(+). The enzyme catalyses L-homoserine + NAD(+) = L-aspartate 4-semialdehyde + NADH + H(+). Its pathway is amino-acid biosynthesis; L-methionine biosynthesis via de novo pathway; L-homoserine from L-aspartate: step 3/3. It participates in amino-acid biosynthesis; L-threonine biosynthesis; L-threonine from L-aspartate: step 3/5. In terms of biological role, catalyzes the conversion of L-aspartate-beta-semialdehyde (L-Asa) to L-homoserine (L-Hse), the third step in the biosynthesis of threonine and methionine from aspartate. The protein is Homoserine dehydrogenase (hom) of Lactococcus lactis subsp. lactis (strain IL1403) (Streptococcus lactis).